Reading from the N-terminus, the 389-residue chain is Probable acyl-CoA dehydrogenase fadE25 (389 aa).

This sequence belongs to the acyl-CoA dehydrogenase family. Requires FAD as cofactor.

The catalysed reaction is a 2,3-saturated acyl-CoA + A = a 2,3-dehydroacyl-CoA + AH2. This Mycobacterium leprae (strain TN) protein is Probable acyl-CoA dehydrogenase fadE25 (fadE25).